Here is a 527-residue protein sequence, read N- to C-terminus: GMP synthase [glutamine-hydrolyzing] (527 aa).

In terms of domain architecture, Glutamine amidotransferase type-1 spans Lys4–Asp202. Cys81 acts as the Nucleophile in catalysis. Residues His176 and Glu178 contribute to the active site. In terms of domain architecture, GMPS ATP-PPase spans Trp203–Arg395. Ser230–Ser236 contacts ATP.

Homodimer.

The catalysed reaction is XMP + L-glutamine + ATP + H2O = GMP + L-glutamate + AMP + diphosphate + 2 H(+). Its pathway is purine metabolism; GMP biosynthesis; GMP from XMP (L-Gln route): step 1/1. In terms of biological role, catalyzes the synthesis of GMP from XMP. This Paraburkholderia xenovorans (strain LB400) protein is GMP synthase [glutamine-hydrolyzing].